The chain runs to 171 residues: Putative pre-16S rRNA nuclease (171 aa).

This sequence belongs to the YqgF nuclease family.

It is found in the cytoplasm. Functionally, could be a nuclease involved in processing of the 5'-end of pre-16S rRNA. The protein is Putative pre-16S rRNA nuclease of Corynebacterium diphtheriae (strain ATCC 700971 / NCTC 13129 / Biotype gravis).